A 522-amino-acid polypeptide reads, in one-letter code: Glucans biosynthesis protein G (522 aa).

The signal sequence occupies residues 1 to 33 (MLVNILSKKPRAASVRWLGATVLFTLLTSPAWA).

This sequence belongs to the OpgD/OpgG family.

Its subcellular location is the periplasm. It functions in the pathway glycan metabolism; osmoregulated periplasmic glucan (OPG) biosynthesis. Its function is as follows. Involved in the biosynthesis of osmoregulated periplasmic glucans (OPGs). The polypeptide is Glucans biosynthesis protein G (Serratia proteamaculans (strain 568)).